Consider the following 470-residue polypeptide: Ubiquitin carboxyl-terminal hydrolase calypso (470 aa).

The 232-residue stretch at Gly43–Pro274 folds into the UCH catalytic domain. Cys129 (nucleophile) is an active-site residue. The Proton donor role is filled by His211. Residues Asp305 to Leu324 are disordered. The ULD domain occupies Asn373–Pro401. Residues Lys403–Lys470 form a positively charged C-terminal tail required for binding nucleosomes region. Residues Ala422 to Ser451 show a composition bias toward low complexity. The segment at Ala422 to Lys470 is disordered. Residues Pro456–Lys470 are compositionally biased toward basic residues.

This sequence belongs to the peptidase C12 family. BAP1 subfamily. Catalytic component of the polycomb repressive deubiquitinase (PR-DUB) complex, at least composed of caly/calypso, Asx and sba (MBD5/6 homolog). The PR-DUB complex associates with nucleosomes to mediate deubiquitination of histone H2AK118ub1 substrates; the association requires the positively charged C-terminal tail of caly, probably due to direct binding of DNA. Interacts (via ULD domain) with Asx (via DEUBAD domain); the interaction produces a stable heterodimer with a composite binding site for ubiquitin. Homodimerizes (via coiled-coil hinge-region between the UCH and ULD domains) to mediate assembly of 2 copies of the caly-Asx heterodimer into a bisymmetric tetramer; dimerization enhances PR-DUB association with nucleosomes.

It is found in the nucleus. It catalyses the reaction Thiol-dependent hydrolysis of ester, thioester, amide, peptide and isopeptide bonds formed by the C-terminal Gly of ubiquitin (a 76-residue protein attached to proteins as an intracellular targeting signal).. Its function is as follows. Catalytic component of the polycomb repressive deubiquitinase (PR-DUB) complex, a complex that specifically mediates deubiquitination of histone H2A monoubiquitinated at 'Lys-119' (H2AK118ub1). Mediates bisymmetric organization of the PR-DUB complex and is involved in association with nucleosomes to mediate deubiquitination. Does not deubiquitinate monoubiquitinated histone H2B. Required to maintain the transcriptionally repressive state of homeotic genes throughout development. The PR-DUB complex has weak or no activity toward 'Lys-48'- and 'Lys-63'-linked polyubiquitin chains. Polycomb group (PcG) protein. In Drosophila ananassae (Fruit fly), this protein is Ubiquitin carboxyl-terminal hydrolase calypso.